The chain runs to 212 residues: Pyridoxine/pyridoxamine 5'-phosphate oxidase (212 aa).

Substrate-binding positions include 7–10 and Lys-66; that span reads RREY. Residues 61-66, 76-77, Lys-83, and Gln-105 contribute to the FMN site; these read RIVLLK and YT. 3 residues coordinate substrate: Tyr-123, Arg-127, and Ser-131. FMN contacts are provided by residues 140-141 and Trp-185; that span reads QS. Residue 191-193 participates in substrate binding; it reads RLH. Arg-195 contacts FMN.

This sequence belongs to the pyridoxamine 5'-phosphate oxidase family. In terms of assembly, homodimer. FMN is required as a cofactor.

It carries out the reaction pyridoxamine 5'-phosphate + O2 + H2O = pyridoxal 5'-phosphate + H2O2 + NH4(+). The catalysed reaction is pyridoxine 5'-phosphate + O2 = pyridoxal 5'-phosphate + H2O2. Its pathway is cofactor metabolism; pyridoxal 5'-phosphate salvage; pyridoxal 5'-phosphate from pyridoxamine 5'-phosphate: step 1/1. It functions in the pathway cofactor metabolism; pyridoxal 5'-phosphate salvage; pyridoxal 5'-phosphate from pyridoxine 5'-phosphate: step 1/1. Functionally, catalyzes the oxidation of either pyridoxine 5'-phosphate (PNP) or pyridoxamine 5'-phosphate (PMP) into pyridoxal 5'-phosphate (PLP). This chain is Pyridoxine/pyridoxamine 5'-phosphate oxidase, found in Idiomarina loihiensis (strain ATCC BAA-735 / DSM 15497 / L2-TR).